A 537-amino-acid polypeptide reads, in one-letter code: CTP synthase (537 aa).

The interval 1 to 268 (MPFKCIFLTG…ANFIGEKLKL (268 aa)) is amidoligase domain. Ser14 is a binding site for CTP. Position 14 (Ser14) interacts with UTP. ATP is bound by residues 15–20 (SLGKGL) and Asp72. The Mg(2+) site is built by Asp72 and Glu142. Residues 149–151 (DIE), 188–193 (KSKPTQ), and Lys224 each bind CTP. UTP-binding positions include 188–193 (KSKPTQ) and Lys224. The Glutamine amidotransferase type-1 domain maps to 293 to 533 (KIGVVGKYVQ…IEAALVYSKD (241 aa)). L-glutamine is bound at residue Gly352. Residue Cys379 is the Nucleophile; for glutamine hydrolysis of the active site. L-glutamine is bound by residues 380–383 (LGMQ), Glu403, and Arg461. Catalysis depends on residues His506 and Glu508.

Belongs to the CTP synthase family. As to quaternary structure, homotetramer.

The enzyme catalyses UTP + L-glutamine + ATP + H2O = CTP + L-glutamate + ADP + phosphate + 2 H(+). The catalysed reaction is L-glutamine + H2O = L-glutamate + NH4(+). It catalyses the reaction UTP + NH4(+) + ATP = CTP + ADP + phosphate + 2 H(+). It participates in pyrimidine metabolism; CTP biosynthesis via de novo pathway; CTP from UDP: step 2/2. With respect to regulation, allosterically activated by GTP, when glutamine is the substrate; GTP has no effect on the reaction when ammonia is the substrate. The allosteric effector GTP functions by stabilizing the protein conformation that binds the tetrahedral intermediate(s) formed during glutamine hydrolysis. Inhibited by the product CTP, via allosteric rather than competitive inhibition. In terms of biological role, catalyzes the ATP-dependent amination of UTP to CTP with either L-glutamine or ammonia as the source of nitrogen. Regulates intracellular CTP levels through interactions with the four ribonucleotide triphosphates. In Chlamydia pneumoniae (Chlamydophila pneumoniae), this protein is CTP synthase.